Here is a 172-residue protein sequence, read N- to C-terminus: Photosystem I assembly protein Ycf3 (172 aa).

TPR repeat units follow at residues 35–70 (AFTY…EIDP), 74–107 (SYIL…NPFL), and 122–155 (GERA…TPGN).

It belongs to the Ycf3 family.

It is found in the plastid. The protein resides in the chloroplast thylakoid membrane. Functionally, essential for the assembly of the photosystem I (PSI) complex. May act as a chaperone-like factor to guide the assembly of the PSI subunits. This chain is Photosystem I assembly protein Ycf3, found in Dioscorea elephantipes (Elephant's foot yam).